The chain runs to 113 residues: U10-theraphotoxin-Hs2a (113 aa).

The N-terminal stretch at 1 to 21 is a signal peptide; the sequence is MNTVRVTFLLVFVLAVSLGQA. A propeptide spanning residues 22–67 is cleaved from the precursor; it reads DEDGNRMEKRQKKTEAENLLLPKLEELDAKLWEEDSVESRNSRQKR. Intrachain disulfides connect cysteine 68-cysteine 86, cysteine 75-cysteine 91, and cysteine 85-cysteine 106.

Belongs to the neurotoxin 14 (magi-1) family. 02 (HWTX-XVIc) subfamily. Expressed by the venom gland.

The protein localises to the secreted. Functionally, probable ion channel inhibitor. This Cyriopagopus schmidti (Chinese bird spider) protein is U10-theraphotoxin-Hs2a.